A 398-amino-acid polypeptide reads, in one-letter code: 1-deoxy-D-xylulose 5-phosphate reductoisomerase (398 aa).

The NADPH site is built by T10, G11, S12, I13, K37, N38, and N124. Residue K125 participates in 1-deoxy-D-xylulose 5-phosphate binding. E126 lines the NADPH pocket. A Mn(2+)-binding site is contributed by D150. S151, E152, S186, and H209 together coordinate 1-deoxy-D-xylulose 5-phosphate. Mn(2+) is bound at residue E152. G215 contacts NADPH. 1-deoxy-D-xylulose 5-phosphate-binding residues include S222, N227, K228, and E231. Position 231 (E231) interacts with Mn(2+).

Belongs to the DXR family. As to quaternary structure, homodimer. It depends on Mg(2+) as a cofactor. Mn(2+) serves as cofactor.

It catalyses the reaction 2-C-methyl-D-erythritol 4-phosphate + NADP(+) = 1-deoxy-D-xylulose 5-phosphate + NADPH + H(+). It participates in isoprenoid biosynthesis; isopentenyl diphosphate biosynthesis via DXP pathway; isopentenyl diphosphate from 1-deoxy-D-xylulose 5-phosphate: step 1/6. In terms of biological role, catalyzes the NADPH-dependent rearrangement and reduction of 1-deoxy-D-xylulose-5-phosphate (DXP) to 2-C-methyl-D-erythritol 4-phosphate (MEP). This is 1-deoxy-D-xylulose 5-phosphate reductoisomerase from Buchnera aphidicola subsp. Schizaphis graminum (strain Sg).